The primary structure comprises 396 residues: tRNA-specific 2-thiouridylase MnmA (396 aa).

Residues 11–18 (GLSGGVDS) and methionine 37 contribute to the ATP site. An interaction with target base in tRNA region spans residues 97–99 (NPD). The Nucleophile role is filled by cysteine 102. An intrachain disulfide couples cysteine 102 to cysteine 225. Glycine 126 is a binding site for ATP. An interaction with tRNA region spans residues 175–177 (KDQ). Cysteine 225 acts as the Cysteine persulfide intermediate in catalysis. The interval 343 to 344 (RY) is interaction with tRNA.

Belongs to the MnmA/TRMU family.

The protein resides in the cytoplasm. The catalysed reaction is S-sulfanyl-L-cysteinyl-[protein] + uridine(34) in tRNA + AH2 + ATP = 2-thiouridine(34) in tRNA + L-cysteinyl-[protein] + A + AMP + diphosphate + H(+). Catalyzes the 2-thiolation of uridine at the wobble position (U34) of tRNA, leading to the formation of s(2)U34. The chain is tRNA-specific 2-thiouridylase MnmA from Methylibium petroleiphilum (strain ATCC BAA-1232 / LMG 22953 / PM1).